The sequence spans 227 residues: UPF0173 metal-dependent hydrolase BCE33L4354 (227 aa).

This sequence belongs to the UPF0173 family.

In Bacillus cereus (strain ZK / E33L), this protein is UPF0173 metal-dependent hydrolase BCE33L4354.